Consider the following 228-residue polypeptide: uncharacterized protein (228 aa).

Positions 1-28 (MRKKRVITCVMAASLTLGSLLPAGYASA) are cleaved as a signal peptide.

This is an uncharacterized protein from Bacillus subtilis (strain 168).